The following is a 447-amino-acid chain: Chromosomal replication initiator protein DnaA (447 aa).

The tract at residues Met-1–Val-74 is domain I, interacts with DnaA modulators. Residues Val-74 to Ala-109 form a domain II region. Residues Met-110–Ala-326 form a domain III, AAA+ region region. ATP-binding residues include Gly-154, Gly-156, Lys-157, and Thr-158. Positions Thr-327 to Ser-447 are domain IV, binds dsDNA.

The protein belongs to the DnaA family. As to quaternary structure, oligomerizes as a right-handed, spiral filament on DNA at oriC.

The protein localises to the cytoplasm. In terms of biological role, plays an essential role in the initiation and regulation of chromosomal replication. ATP-DnaA binds to the origin of replication (oriC) to initiate formation of the DNA replication initiation complex once per cell cycle. Binds the DnaA box (a 9 base pair repeat at the origin) and separates the double-stranded (ds)DNA. Forms a right-handed helical filament on oriC DNA; dsDNA binds to the exterior of the filament while single-stranded (ss)DNA is stabiized in the filament's interior. The ATP-DnaA-oriC complex binds and stabilizes one strand of the AT-rich DNA unwinding element (DUE), permitting loading of DNA polymerase. After initiation quickly degrades to an ADP-DnaA complex that is not apt for DNA replication. Binds acidic phospholipids. Strand separation requires the DnaA boxes and adjacent DnaA-trio motifs as well as ATP. In Enterococcus faecalis (strain ATCC 700802 / V583), this protein is Chromosomal replication initiator protein DnaA.